The primary structure comprises 30 residues: V-type proton ATPase catalytic subunit A isoform 1 (30 aa).

Belongs to the ATPase alpha/beta chains family. V-ATPase is a heteromultimeric enzyme composed of a peripheral catalytic V1 complex (main components: subunits A, B, C, D, E, and F) attached to an integral membrane V0 proton pore complex (main component: the proteolipid protein).

It carries out the reaction ATP + H2O + 4 H(+)(in) = ADP + phosphate + 5 H(+)(out). Functionally, catalytic subunit of the peripheral V1 complex of vacuolar ATPase. V-ATPase vacuolar ATPase is responsible for acidifying a variety of intracellular compartments in eukaryotic cells. This is V-type proton ATPase catalytic subunit A isoform 1 from Psilotum nudum (Whisk fern).